The primary structure comprises 364 residues: N-acetyl-gamma-glutamyl-phosphate reductase (364 aa).

The active site involves cysteine 157.

This sequence belongs to the NAGSA dehydrogenase family. Type 1 subfamily.

The protein localises to the cytoplasm. It catalyses the reaction N-acetyl-L-glutamate 5-semialdehyde + phosphate + NADP(+) = N-acetyl-L-glutamyl 5-phosphate + NADPH + H(+). The protein operates within amino-acid biosynthesis; L-arginine biosynthesis; N(2)-acetyl-L-ornithine from L-glutamate: step 3/4. Its function is as follows. Catalyzes the NADPH-dependent reduction of N-acetyl-5-glutamyl phosphate to yield N-acetyl-L-glutamate 5-semialdehyde. This is N-acetyl-gamma-glutamyl-phosphate reductase from Bifidobacterium longum (strain NCC 2705).